Consider the following 352-residue polypeptide: DNA polymerase IV (352 aa).

In terms of domain architecture, UmuC spans 7–187 (IIHIDMDCFY…LSLKKIPGIG (181 aa)). Residues Asp-11 and Asp-105 each contribute to the Mg(2+) site. Glu-106 is an active-site residue.

This sequence belongs to the DNA polymerase type-Y family. As to quaternary structure, monomer. Mg(2+) serves as cofactor.

It is found in the cytoplasm. It catalyses the reaction DNA(n) + a 2'-deoxyribonucleoside 5'-triphosphate = DNA(n+1) + diphosphate. In terms of biological role, poorly processive, error-prone DNA polymerase involved in untargeted mutagenesis. Copies undamaged DNA at stalled replication forks, which arise in vivo from mismatched or misaligned primer ends. These misaligned primers can be extended by PolIV. Exhibits no 3'-5' exonuclease (proofreading) activity. May be involved in translesional synthesis, in conjunction with the beta clamp from PolIII. This is DNA polymerase IV from Colwellia psychrerythraea (strain 34H / ATCC BAA-681) (Vibrio psychroerythus).